A 1470-amino-acid chain; its full sequence is Transient receptor potential cation channel subfamily M member 2 (1470 aa).

At 1-725 (MDEAALEPTL…GELSVDNPHW (725 aa)) the chain is on the cytoplasmic side. ADP-D-ribose is bound by residues Tyr-267, Arg-274, 305–308 (GPGT), and Arg-330. An intramembrane segment occupies 726-738 (KVLLCMIFFPLIY). Residues 739–808 (TGFLTFRRDE…MSFLKSPQVK (70 aa)) are Cytoplasmic-facing. The chain crosses the membrane as a helical span at residues 809-829 (FYWNIASYFGFLWLFAVVLMI). The Extracellular segment spans residues 830–836 (DFQTSPS). Residues 837 to 857 (WRELLLYVWLTSLVCEEIRQL) form a helical membrane-spanning segment. Glu-853 and Gln-856 together coordinate Ca(2+). The Cytoplasmic segment spans residues 858–876 (YHDFDGSGFRRKAKMYIKD). A helical transmembrane segment spans residues 877–897 (LWNILDVLSIVLFIAGLICRL). Asn-879 lines the Ca(2+) pocket. Over 898 to 905 (QASDTVFY) the chain is Extracellular. A helical transmembrane segment spans residues 906–926 (IGKVILCIDFIIFCLRLMAIF). Over 927–941 (SISRTLGPKIIIVRR) the chain is Cytoplasmic. Residues 942 to 968 (MMLDLFFFMFLLSIWVVAYGVAKQGIL) form a helical membrane-spanning segment. The Extracellular portion of the chain corresponds to 969–977 (IENEERLNW). Residues 978 to 1002 (IIRGAVYEPYITIFGNFPTNIDNTL) constitute an intramembrane region (pore-forming). Residues 991–993 (FGN) carry the Selectivity filter motif. The Extracellular portion of the chain corresponds to 1003–1034 (FDISSCSVNASDPLKPKCPMLNADNTPVFPEW). Cys-1008 and Cys-1020 are oxidised to a cystine. The N-linked (GlcNAc...) asparagine glycan is linked to Asn-1011. A helical membrane pass occupies residues 1035–1059 (LTIMMLCVYLLFANILLLNLLIAIF). The Cytoplasmic portion of the chain corresponds to 1060–1087 (NYTFQEVQDNTDTIWKFQRYELIKEYHS). A Ca(2+)-binding site is contributed by Glu-1084. An intramembrane segment occupies 1088–1105 (RPALPPPFILLSHLILFI). The Cytoplasmic segment spans residues 1106–1470 (RGVFLRDLPQ…QIAHHHNTYF (365 aa)). A divergent Nudix hydrolase-like domain region spans residues 1157–1470 (HRIHDTAEKV…QIAHHHNTYF (314 aa)). Disordered stretches follow at residues 1215 to 1256 (KSKV…LQYP) and 1281 to 1314 (PPVY…GKGA). Positions 1231–1244 (DDGDSSGQETDDEE) are enriched in acidic residues. Positions 1283 to 1295 (VYNQQDSSESDTS) are enriched in polar residues. Asp-1398 and Arg-1400 together coordinate ADP-D-ribose.

The protein belongs to the transient receptor (TC 1.A.4) family. LTrpC subfamily. TRPM2 sub-subfamily. Homotetramer.

It localises to the cell membrane. It carries out the reaction Ca(2+)(in) = Ca(2+)(out). The enzyme catalyses Na(+)(in) = Na(+)(out). Activated by intracellular ADP-ribose. Ca(2+) and PI(4,5)P2 are required for channel opening by ADP-ribose. Its function is as follows. Nonselective, voltage-independent cation channel that mediates Ca(2+) influx, leading to increased cytoplasmic Ca(2+) levels. Functions as a ligand-gated ion channel, gated by intracellular adenosine diphosphate ribose (ADP-ribose), Ca(2+), warm temperature, and oxidative stress. Binding of ADP-ribose to the cytoplasmic N-terminal region causes a conformation change; the channel is primed but still requires Ca(2+) binding to trigger channel opening. The chain is Transient receptor potential cation channel subfamily M member 2 from Danio rerio (Zebrafish).